Here is a 291-residue protein sequence, read N- to C-terminus: Transmembrane protein 41B (291 aa).

Basic and acidic residues predominate over residues 1–11 (MAKGRVADRSP). Positions 1-43 (MAKGRVADRSPTEMLHSTPAGDRAVRTQGSAAPGSKDHLNEKP) are disordered. T18 is modified (phosphothreonine). At S35 the chain carries Phosphoserine. A run of 6 helical transmembrane segments spans residues 52 to 72 (TSLL…FLVY), 109 to 129 (FYVQ…TFAI), 147 to 169 (LALF…LSYL), 197 to 217 (LINY…FINI), 225 to 245 (PLKV…FVAI), and 262 to 282 (SWSS…PAIF). Positions 140 to 251 (GFLYPFPLAL…FVAIKAGTTL (112 aa)) are VTT domain; required for its function in autophagy.

Belongs to the TMEM41 family. In terms of assembly, interacts with VMP1. Interacts with COPA, COPB1, VDAC1 and ERLIN2. Interacts with ATG2A. Interacts with SURF4. In terms of tissue distribution, expressed in brain, spinal cord, kidney and first lumbar dorsal root ganglia during postnatal development. Expressed in motor neurons and proprioceptive neurons.

The protein localises to the endoplasmic reticulum membrane. Its subcellular location is the endomembrane system. The catalysed reaction is a 1,2-diacyl-sn-glycero-3-phospho-L-serine(in) = a 1,2-diacyl-sn-glycero-3-phospho-L-serine(out). It catalyses the reaction cholesterol(in) = cholesterol(out). It carries out the reaction a 1,2-diacyl-sn-glycero-3-phosphocholine(in) = a 1,2-diacyl-sn-glycero-3-phosphocholine(out). The enzyme catalyses a 1,2-diacyl-sn-glycero-3-phosphoethanolamine(in) = a 1,2-diacyl-sn-glycero-3-phosphoethanolamine(out). Functionally, phospholipid scramblase involved in lipid homeostasis and membrane dynamics processes. Has phospholipid scramblase activity toward cholesterol and phosphatidylserine, as well as phosphatidylethanolamine and phosphatidylcholine. Required for autophagosome formation: participates in early stages of autophagosome biogenesis at the endoplasmic reticulum (ER) membrane by reequilibrating the leaflets of the ER as lipids are extracted by ATG2 (ATG2A or ATG2B) to mediate autophagosome assembly. In addition to autophagy, involved in other processes in which phospholipid scramblase activity is required. Required for normal motor neuron development. In Mus musculus (Mouse), this protein is Transmembrane protein 41B.